The following is a 293-amino-acid chain: 4-hydroxy-tetrahydrodipicolinate synthase (293 aa).

Thr45 is a binding site for pyruvate. The active-site Proton donor/acceptor is the Tyr133. Lys162 acts as the Schiff-base intermediate with substrate in catalysis. Ile204 is a binding site for pyruvate.

Belongs to the DapA family. Homotetramer; dimer of dimers.

Its subcellular location is the cytoplasm. It catalyses the reaction L-aspartate 4-semialdehyde + pyruvate = (2S,4S)-4-hydroxy-2,3,4,5-tetrahydrodipicolinate + H2O + H(+). The protein operates within amino-acid biosynthesis; L-lysine biosynthesis via DAP pathway; (S)-tetrahydrodipicolinate from L-aspartate: step 3/4. Catalyzes the condensation of (S)-aspartate-beta-semialdehyde [(S)-ASA] and pyruvate to 4-hydroxy-tetrahydrodipicolinate (HTPA). This Brucella suis biovar 1 (strain 1330) protein is 4-hydroxy-tetrahydrodipicolinate synthase.